Here is a 350-residue protein sequence, read N- to C-terminus: Membrane progestin receptor alpha (350 aa).

Topologically, residues 1–80 are cytoplasmic; it reads MATMVAQKLS…HNEAVNVWTH (80 aa). The chain crosses the membrane as a helical span at residues 81 to 101; the sequence is LLAALVLLLRLAIFVGTVDFW. Topologically, residues 102 to 105 are extracellular; it reads GDPH. A helical transmembrane segment spans residues 106 to 126; it reads ALPLFIIVLASFTYLSLSALA. At 127-139 the chain is on the cytoplasmic side; the sequence is HLLQAKSEFWHYS. Residues 140–160 form a helical membrane-spanning segment; it reads FFFLDYVGVAVYQFGSALAHF. The Extracellular segment spans residues 161–165; that stretch reads YYAIE. The chain crosses the membrane as a helical span at residues 166–186; it reads PAWHAQVQTIFLPMAAFLAWL. Over 187-239 the chain is Cytoplasmic; it reads SCTGSCYNKYIQKPGLLGRTCQEVPSALAYALDISPVAHRILASPEPATDDPA. The helical transmembrane segment at 240 to 260 threads the bilayer; that stretch reads LLYHKCQVVFFLLAAAFFSAF. Residues 261–278 are Extracellular-facing; it reads MPERWFPGSCHIFGQGHQ. A helical membrane pass occupies residues 279-299; it reads LFHVFLVLCTLAQLEAVALDY. Residues 300–318 lie on the Cytoplasmic side of the membrane; it reads EARRPIYEPLHTRWPHNFS. A helical transmembrane segment spans residues 319-339; sequence GLFLLTVGSSILTAFLLSQLV. The Extracellular portion of the chain corresponds to 340-350; that stretch reads RRKLDLDRKTQ.

Belongs to the ADIPOR family.

Its subcellular location is the cell membrane. Functionally, plasma membrane progesterone (P4) receptor coupled to G proteins. Seems to act through a G(i) mediated pathway. May be involved in oocyte maturation. Involved in neurosteroid inhibition of apoptosis. Also binds dehydroepiandrosterone (DHEA), pregnanolone, pregnenolone and allopregnanolone. This Sus scrofa (Pig) protein is Membrane progestin receptor alpha (PAQR7).